A 221-amino-acid polypeptide reads, in one-letter code: Protein RER1D (221 aa).

Helical transmembrane passes span 41–58 (IVRRWLVTLVAAVIYIYR), 64–84 (GYFVISYGLATYILNLLIGFL), 128–148 (FVVAFVMTFFSFLDVPVFWPI), and 149–169 (LLCYWLVLYSLTMKRLIVHMF). The tract at residues 200–221 (KGDGGDDRPSSSNSSQGNEKQD) is disordered. Positions 209–221 (SSSNSSQGNEKQD) are enriched in polar residues.

This sequence belongs to the RER1 family.

The protein resides in the membrane. Involved in the retrieval of endoplasmic reticulum membrane proteins from the early Golgi compartment. In Arabidopsis thaliana (Mouse-ear cress), this protein is Protein RER1D.